Reading from the N-terminus, the 317-residue chain is Cytochrome c biogenesis protein CcsA (317 aa).

7 helical membrane passes run 13–35 (ISFS…HEIV), 44–64 (GMIA…IYSG), 71–91 (LYES…VPYF), 143–163 (MLLS…LLVI), 171–191 (MIGF…IKYL), 225–245 (VIGL…VWAN), and 286–306 (AIVA…VNLL).

This sequence belongs to the CcmF/CycK/Ccl1/NrfE/CcsA family. As to quaternary structure, may interact with Ccs1.

It localises to the plastid. Its subcellular location is the chloroplast thylakoid membrane. Required during biogenesis of c-type cytochromes (cytochrome c6 and cytochrome f) at the step of heme attachment. This is Cytochrome c biogenesis protein CcsA from Illicium oligandrum (Star anise).